Reading from the N-terminus, the 325-residue chain is MSLLAKIVDGKNLSFEEAYELFNELKGSDGVLIGAYLAALQTKGYTGEELAGLARAMRDSAVKLDLGKVADTAGTGGDGSSTINVSTASALILSAFTRVAKHGNVSITSKSGSANVLEALGLNIRVSPERAREMVESTNFTFIFAPAYHPALRPIMPVRKALGIKTVFNVIGPLANPADPAYQVVGVNSPELLEPVAEALEFLGVERALVVHGSGMDEVSPHRETLVLEVGNGVERYTLSPEDFGIEPVKPLPCSSPEESAARIKAVLGGSGRREDRDFILVNASAALYASGVAEDFREGLEMAREALGQGMLEKLEEIACLSKS.

Residues Gly74, 77-78 (GD), Thr82, 84-87 (NVST), 101-109 (KHGNVSITS), and Ser113 contribute to the 5-phospho-alpha-D-ribose 1-diphosphate site. Gly74 serves as a coordination point for anthranilate. Ser86 lines the Mg(2+) pocket. An anthranilate-binding site is contributed by Asn104. Arg159 provides a ligand contact to anthranilate. The Mg(2+) site is built by Asp217 and Glu218.

It belongs to the anthranilate phosphoribosyltransferase family. As to quaternary structure, homodimer. It depends on Mg(2+) as a cofactor.

The catalysed reaction is N-(5-phospho-beta-D-ribosyl)anthranilate + diphosphate = 5-phospho-alpha-D-ribose 1-diphosphate + anthranilate. The protein operates within amino-acid biosynthesis; L-tryptophan biosynthesis; L-tryptophan from chorismate: step 2/5. Its function is as follows. Catalyzes the transfer of the phosphoribosyl group of 5-phosphorylribose-1-pyrophosphate (PRPP) to anthranilate to yield N-(5'-phosphoribosyl)-anthranilate (PRA). This is Anthranilate phosphoribosyltransferase from Thermococcus kodakarensis (strain ATCC BAA-918 / JCM 12380 / KOD1) (Pyrococcus kodakaraensis (strain KOD1)).